Consider the following 731-residue polypeptide: E3 ubiquitin-protein ligase COP1 (731 aa).

Positions 1 to 40 (MSGSRQAGSGSAGTSPGSSAASSVTSASSSLSSSPSPPSV) are disordered. The short motif at 109 to 113 (GSRKR) is the Nuclear localization signal 1 element. Residues 136-174 (CPICFDMIEEAYMTKCGHSFCYKCIHQSLEDNNRCPKCN) form an RING-type zinc finger. The Nuclear localization signal 2 signature appears at 195-206 (KQKQRFEEKRFK). Residues 233–301 (LDLANVNLML…DIKRVEEMSG (69 aa)) are a coiled coil. The Nuclear export signal motif lies at 235–245 (LANVNLMLELL). The interval 305–325 (PVSEDSTVPQFEAPSPSHSSI) is disordered. WD repeat units follow at residues 419–458 (NGSS…QDAV), 468–508 (TCNS…RSKV), 511–551 (EHEK…SVAS), 553–593 (EAKA…QPIM), 597–635 (GHRK…CLRS), 638–677 (GHIN…TLLT), and 691–729 (RKED…KVLE). Residues 643-645 (KNF) form an interaction with TRIB1 region.

Belongs to the COP1 family. As to quaternary structure, homodimer. Homodimerization is mediated by the coiled coil domain. Component of the DCX DET1-COP1 ubiquitin ligase complex at least composed of RBX1, DET1, DDB1, CUL4A and COP1. Isoform 2 does not interact with CUL4A but still binds to RBX1, suggesting that the interaction may be mediated by another cullin protein. Isoform 1 and isoform 2 interact with CUL5 but not with CUL1, CUL2 not CUL3. Interacts with bZIP transcription factors JUN, JUNB and JUND but not with FOS, ATF2 nor XBP1. Interacts with p53 (TP53). Interacts with COPS6; this interaction stabilizes RFWD2 through reducing its auto-ubiquitination and decelerating its turnover rate. Interacts with SFN; this interaction leads to SFN degradation. Isoform 4 forms heterodimers with isoform 1, preventing its association with DET1. Interacts with p53/TP53 and MTA1. Interacts with TRIB1 (via C-terminus) and TRIB2. Post-translationally, autoubiquitinated. MTA1 destabilizes it by promoting its autoubiquitination. As to expression, ubiquitously expressed at low level. Expressed at higher level in testis, placenta, skeletal muscle and heart.

The protein resides in the nucleus speckle. Its subcellular location is the cytoplasm. It carries out the reaction S-ubiquitinyl-[E2 ubiquitin-conjugating enzyme]-L-cysteine + [acceptor protein]-L-lysine = [E2 ubiquitin-conjugating enzyme]-L-cysteine + N(6)-ubiquitinyl-[acceptor protein]-L-lysine.. The protein operates within protein modification; protein ubiquitination. With respect to regulation, TRIB1 competes with substrates for RFWD2 binding. E3 ubiquitin-protein ligase that mediates ubiquitination and subsequent proteasomal degradation of target proteins. E3 ubiquitin ligases accept ubiquitin from an E2 ubiquitin-conjugating enzyme in the form of a thioester and then directly transfers the ubiquitin to targeted substrates. Involved in JUN ubiquitination and degradation. Directly involved in p53 (TP53) ubiquitination and degradation, thereby abolishing p53-dependent transcription and apoptosis. Ubiquitinates p53 independently of MDM2 or RCHY1. Probably mediates E3 ubiquitin ligase activity by functioning as the essential RING domain subunit of larger E3 complexes. In contrast, it does not constitute the catalytic RING subunit in the DCX DET1-COP1 complex that negatively regulates JUN, the ubiquitin ligase activity being mediated by RBX1. Involved in 14-3-3 protein sigma/SFN ubiquitination and proteasomal degradation, leading to AKT activation and promotion of cell survival. Ubiquitinates MTA1 leading to its proteasomal degradation. Upon binding to TRIB1, ubiquitinates CEBPA, which lacks a canonical COP1-binding motif. This is E3 ubiquitin-protein ligase COP1 from Homo sapiens (Human).